Consider the following 128-residue polypeptide: 3-aminoacrylate deaminase RutC (128 aa).

This sequence belongs to the RutC family. In terms of assembly, homotrimer.

The catalysed reaction is (Z)-3-aminoacrylate + H2O + H(+) = 3-oxopropanoate + NH4(+). Involved in pyrimidine catabolism. Catalyzes the deamination of 3-aminoacrylate to malonic semialdehyde, a reaction that can also occur spontaneously. RutC may facilitate the reaction and modulate the metabolic fitness, rather than catalyzing essential functions. The protein is 3-aminoacrylate deaminase RutC of Escherichia coli O103:H2 (strain 12009 / EHEC).